A 279-amino-acid chain; its full sequence is GTP cyclohydrolase MptA (279 aa).

It belongs to the GTP cyclohydrolase IV family. Homodimer. Fe(2+) serves as cofactor.

It catalyses the reaction GTP + H2O = 7,8-dihydroneopterin 2',3'-cyclic phosphate + formate + diphosphate + H(+). Its pathway is cofactor biosynthesis; 5,6,7,8-tetrahydromethanopterin biosynthesis. Converts GTP to 7,8-dihydro-D-neopterin 2',3'-cyclic phosphate, the first intermediate in the biosynthesis of coenzyme methanopterin. The sequence is that of GTP cyclohydrolase MptA from Korarchaeum cryptofilum (strain OPF8).